We begin with the raw amino-acid sequence, 692 residues long: SH3 domain-containing protein 21 (692 aa).

The disordered stretch occupies residues 1 to 60; sequence MVQSELQLQPRAGGRAEAASWGDRGNDKGGFGNPDMPSVSPGPQRPPKLSSLAYDSPPDY. Positions 65 to 126 constitute an SH3 domain; the sequence is SHPEAYRVLF…PDNFVLPPPP (62 aa). 3 disordered regions span residues 132–501, 536–605, and 672–692; these read PRKV…EVLP, PKGG…SQET, and VMQG…TQTY. Residues 177–186 are compositionally biased toward basic and acidic residues; sequence PSRDSQKLTS. Polar residues predominate over residues 210 to 220; that stretch reads TQTPQQRSVSS. Composition is skewed to basic and acidic residues over residues 378–396, 490–501, and 542–582; these read VSTR…EALQ, NEERLLRGEVLP, and SKEE…KEEV. Residues 628-678 are a coiled coil; the sequence is SLRGEVESLRRALELMGVQLERKLTDIWEELKSEKEQRQRLEVQVMQGTQK. Residues 673 to 692 show a composition bias toward polar residues; sequence MQGTQKSQTPRIIHAQTQTY.

This is SH3 domain-containing protein 21 (SH3D21) from Macaca fascicularis (Crab-eating macaque).